Reading from the N-terminus, the 512-residue chain is CaM kinase-like vesicle-associated protein (512 aa).

A Protein kinase domain is found at 24 to 286 (YDLGQVIKTE…AEEAISHEWI (263 aa)). Positions 328-347 (APEQSGTAATQSASDAATPG) are disordered. Positions 332–347 (SGTAATQSASDAATPG) are enriched in low complexity. At Ser-392 the chain carries Phosphoserine. Positions 393-512 (ADRSATPATD…AQESQRVETS (120 aa)) are disordered. Positions 398–439 (TPATDGSATPATDGSVTPATDGSITPATDGSVTPATDRSATP) are enriched in polar residues. Thr-446 bears the Phosphothreonine mark. The segment covering 449–460 (TEESTVPATQSS) has biased composition (polar residues). Low complexity predominate over residues 461-478 (ALPAAKAAATPEPAVAQP). Thr-470 carries the phosphothreonine modification.

Belongs to the protein kinase superfamily. CAMK Ser/Thr protein kinase family. In terms of assembly, interacts with calmodulin, in the presence of calcium. Requires Ca(2+) as cofactor.

It localises to the cell membrane. The protein localises to the cytoplasmic vesicle membrane. Functionally, does not appear to have detectable kinase activity. This chain is CaM kinase-like vesicle-associated protein (Camkv), found in Mus musculus (Mouse).